A 613-amino-acid chain; its full sequence is Portal protein (613 aa).

Positions 577–613 (ATGGDHGIRQAPSARGDAEPDHAKSKPARDPPPGAGS) are disordered. Residues 592 to 605 (GDAEPDHAKSKPAR) are compositionally biased toward basic and acidic residues.

Belongs to the herpesviridae portal protein family. As to quaternary structure, homododecamerizes. Interacts with terminase subunits TRM1 and TRM3.

It localises to the virion. The protein resides in the host nucleus. Its function is as follows. Forms a portal in the viral capsid through which viral DNA is translocated during DNA packaging. Assembles as a dodecamer at a single fivefold axe of the T=16 icosahedric capsid. Binds to the molecular motor that translocates the viral DNA, termed terminase. This is Portal protein from Homo sapiens (Human).